A 380-amino-acid polypeptide reads, in one-letter code: Cytochrome b (380 aa).

4 helical membrane passes run 33-53 (FGSL…FLAM), 77-98 (WLIR…YLHI), 113-133 (WNVG…GYVL), and 178-198 (FFAF…LHLL). Histidine 83 and histidine 97 together coordinate heme b. Residues histidine 182 and histidine 196 each contribute to the heme b site. Position 201 (histidine 201) interacts with a ubiquinone. 4 helical membrane-spanning segments follow: residues 226–246 (YKDL…ALFS), 288–308 (LGGV…PILH), 320–340 (FSQI…WIGG), and 347–367 (YIII…VFFP).

This sequence belongs to the cytochrome b family. As to quaternary structure, the cytochrome bc1 complex contains 3 respiratory subunits (MT-CYB, CYC1 and UQCRFS1), 2 core proteins (UQCRC1 and UQCRC2) and probably 6 low-molecular weight proteins. The cofactor is heme b.

It is found in the mitochondrion inner membrane. Its function is as follows. Component of the ubiquinol-cytochrome c reductase complex (complex III or cytochrome b-c1 complex) that is part of the mitochondrial respiratory chain. The b-c1 complex mediates electron transfer from ubiquinol to cytochrome c. Contributes to the generation of a proton gradient across the mitochondrial membrane that is then used for ATP synthesis. This Apogon semilineatus (Half-lined cardinal) protein is Cytochrome b (mt-cyb).